The sequence spans 122 residues: Large ribosomal subunit protein uL14 (122 aa).

It belongs to the universal ribosomal protein uL14 family. As to quaternary structure, part of the 50S ribosomal subunit. Forms a cluster with proteins L3 and L19. In the 70S ribosome, L14 and L19 interact and together make contacts with the 16S rRNA in bridges B5 and B8.

Binds to 23S rRNA. Forms part of two intersubunit bridges in the 70S ribosome. This Polaromonas naphthalenivorans (strain CJ2) protein is Large ribosomal subunit protein uL14.